We begin with the raw amino-acid sequence, 367 residues long: Alginate lyase (367 aa).

The signal sequence occupies residues 1–24 (MTIFKRISSPALLALALFGGAAHA). Substrate is bound by residues 63–64 (SK), 136–137 (HT), and Tyr-254.

It belongs to the polysaccharide lyase 5 family.

The protein localises to the periplasm. The enzyme catalyses Eliminative cleavage of alginate to give oligosaccharides with 4-deoxy-alpha-L-erythro-hex-4-enuronosyl groups at their non-reducing ends and beta-D-mannuronate at their reducing end.. In terms of biological role, catalyzes the depolymerization of alginate by cleaving the beta-1,4 glycosidic bond between two adjacent sugar residues via a beta-elimination mechanism. May serve to degrade mislocalized alginate that is trapped in the periplasmic space. In Pseudomonas putida (strain ATCC 700007 / DSM 6899 / JCM 31910 / BCRC 17059 / LMG 24140 / F1), this protein is Alginate lyase.